An 83-amino-acid chain; its full sequence is Large ribosomal subunit protein bL31B (83 aa).

This sequence belongs to the bacterial ribosomal protein bL31 family. Type B subfamily. As to quaternary structure, part of the 50S ribosomal subunit.

The chain is Large ribosomal subunit protein bL31B from Levilactobacillus brevis (strain ATCC 367 / BCRC 12310 / CIP 105137 / JCM 1170 / LMG 11437 / NCIMB 947 / NCTC 947) (Lactobacillus brevis).